We begin with the raw amino-acid sequence, 163 residues long: Secretory-abundant heat soluble protein 53582 (163 aa).

The signal sequence occupies residues 1-19 (MARLFVAVALFGVVAFAAA). The interval 22–51 (EWTGKTWLGSWASTDRAENWEAFVDALGLP) is SAHS-c1. Positions 67-95 (YKQGDKYHHEVSIPSKNFKKAIEYTLGTE) are SAHS-c2. The SAHS-c3 stretch occupies residues 108 to 157 (KYTEDGEKLVADVQIPSKNKQIHDIYEVQGDTLTKTYKVGDVVAKRWFTR).

It belongs to the Secretory-abundant heat soluble protein (SAHS) family.

It is found in the secreted. Functionally, secreted heat soluble protein acting as a molecular shield in water-deficient condition. Tardigrade-specific intrinsically disordered proteins (TDPs) are essential for desiccation tolerance by forming non-crystalline amorphous solids upon desiccation, and this vitrified state mirrors their protective capabilities. In Hypsibius exemplaris (Freshwater tardigrade), this protein is Secretory-abundant heat soluble protein 53582.